The chain runs to 775 residues: Probable ubiquitin carboxyl-terminal hydrolase creB (775 aa).

Positions 1–45 (MGSFLRSFRHNGGSTAPSVGAVPAKKEPQPPPMTPLEKRLLDMGP) are disordered. Residues 36 to 45 (LEKRLLDMGP) are compositionally biased toward basic and acidic residues. One can recognise a USP domain in the interval 55 to 468 (YGMENYGNTC…CAYVLFYQET (414 aa)). C64 serves as the catalytic Nucleophile. Disordered regions lie at residues 113–146 (EAEA…DSPE) and 238–269 (ASKQ…KTPN). Residues 256–269 (SVDQSSSTGSKTPN) are compositionally biased toward polar residues. The Proton acceptor role is filled by H419. The segment at 496–775 (LKQNGFPQSP…LRKKSFSILS (280 aa)) is disordered. Low complexity-rich tracts occupy residues 546–566 (ESAP…SPLS) and 576–585 (ERVTTVATPP). Residues 586–653 (KNDALAKKER…ASKAEEDRRL (68 aa)) adopt a coiled-coil conformation. Over residues 589–662 (ALAKKERARE…LSHENGKEKQ (74 aa)) the composition is skewed to basic and acidic residues. Residues 668 to 679 (RLKRGSKSLSHR) show a composition bias toward basic residues. Residues 705–725 (SQTGPTSEQQQQQQQQQSPPN) show a composition bias toward low complexity. The span at 739-757 (TIREDEQVNHKDSKHERTG) shows a compositional bias: basic and acidic residues. Residues 758–775 (HGKWRSFSLRKKSFSILS) are compositionally biased toward basic residues.

Belongs to the peptidase C19 family. In terms of assembly, interacts with creA, creC and qutD.

The enzyme catalyses Thiol-dependent hydrolysis of ester, thioester, amide, peptide and isopeptide bonds formed by the C-terminal Gly of ubiquitin (a 76-residue protein attached to proteins as an intracellular targeting signal).. Its function is as follows. Ubiquitin thioesterase component of the regulatory network controlling carbon source utilization through ubiquitination and deubiquitination involving creA, creB, creC, creD and acrB. Deubiquitinates the creA catabolic repressor and the quinate permease qutD. Also plays a role in response to carbon starvation and the control of extracellular proteases activity. The polypeptide is Probable ubiquitin carboxyl-terminal hydrolase creB (creB) (Aspergillus fumigatus (strain ATCC MYA-4609 / CBS 101355 / FGSC A1100 / Af293) (Neosartorya fumigata)).